The primary structure comprises 279 residues: 3-methyl-2-oxobutanoate hydroxymethyltransferase (279 aa).

Mg(2+) contacts are provided by D44 and D83. 3-methyl-2-oxobutanoate-binding positions include 44 to 45, D83, and K112; that span reads DS. Mg(2+) is bound at residue E114. The active-site Proton acceptor is E181.

Belongs to the PanB family. Homodecamer; pentamer of dimers. Mg(2+) is required as a cofactor.

Its subcellular location is the cytoplasm. It carries out the reaction 3-methyl-2-oxobutanoate + (6R)-5,10-methylene-5,6,7,8-tetrahydrofolate + H2O = 2-dehydropantoate + (6S)-5,6,7,8-tetrahydrofolate. It participates in cofactor biosynthesis; coenzyme A biosynthesis. Its function is as follows. Catalyzes the reversible reaction in which hydroxymethyl group from 5,10-methylenetetrahydrofolate is transferred onto alpha-ketoisovalerate to form ketopantoate. In Nitrosopumilus maritimus (strain SCM1), this protein is 3-methyl-2-oxobutanoate hydroxymethyltransferase.